The sequence spans 103 residues: Cobalt transport protein CbiN (103 aa).

The next 2 membrane-spanning stretches (helical) occupy residues 6–26 (VLTN…PFFV) and 68–88 (LLFA…LGYL).

Belongs to the CbiN family. In terms of assembly, forms an energy-coupling factor (ECF) transporter complex composed of an ATP-binding protein (A component, CbiO), a transmembrane protein (T component, CbiQ) and 2 possible substrate-capture proteins (S components, CbiM and CbiN) of unknown stoichimetry.

The protein resides in the cell membrane. Its pathway is cofactor biosynthesis; adenosylcobalamin biosynthesis. Part of the energy-coupling factor (ECF) transporter complex CbiMNOQ involved in cobalt import. This Clostridium perfringens (strain 13 / Type A) protein is Cobalt transport protein CbiN.